Consider the following 689-residue polypeptide: DNA ligase (689 aa).

Residues Asp-32–Asp-36, Ser-81–Leu-82, and Glu-113 each bind NAD(+). The N6-AMP-lysine intermediate role is filled by Lys-115. NAD(+)-binding residues include Arg-136, Glu-176, Lys-306, and Lys-330. Residues Cys-424, Cys-427, Cys-442, and Cys-448 each contribute to the Zn(2+) site. Positions Ala-606–Ile-689 constitute a BRCT domain.

This sequence belongs to the NAD-dependent DNA ligase family. LigA subfamily. Mg(2+) is required as a cofactor. Requires Mn(2+) as cofactor.

The enzyme catalyses NAD(+) + (deoxyribonucleotide)n-3'-hydroxyl + 5'-phospho-(deoxyribonucleotide)m = (deoxyribonucleotide)n+m + AMP + beta-nicotinamide D-nucleotide.. DNA ligase that catalyzes the formation of phosphodiester linkages between 5'-phosphoryl and 3'-hydroxyl groups in double-stranded DNA using NAD as a coenzyme and as the energy source for the reaction. It is essential for DNA replication and repair of damaged DNA. This is DNA ligase from Colwellia psychrerythraea (strain 34H / ATCC BAA-681) (Vibrio psychroerythus).